A 395-amino-acid polypeptide reads, in one-letter code: NAD(P)H-quinone oxidoreductase subunit H (395 aa).

This sequence belongs to the complex I 49 kDa subunit family. As to quaternary structure, NDH-1 can be composed of about 15 different subunits; different subcomplexes with different compositions have been identified which probably have different functions.

The protein localises to the cellular thylakoid membrane. It catalyses the reaction a plastoquinone + NADH + (n+1) H(+)(in) = a plastoquinol + NAD(+) + n H(+)(out). The catalysed reaction is a plastoquinone + NADPH + (n+1) H(+)(in) = a plastoquinol + NADP(+) + n H(+)(out). Its function is as follows. NDH-1 shuttles electrons from an unknown electron donor, via FMN and iron-sulfur (Fe-S) centers, to quinones in the respiratory and/or the photosynthetic chain. The immediate electron acceptor for the enzyme in this species is believed to be plastoquinone. Couples the redox reaction to proton translocation, and thus conserves the redox energy in a proton gradient. Cyanobacterial NDH-1 also plays a role in inorganic carbon-concentration. This chain is NAD(P)H-quinone oxidoreductase subunit H, found in Prochlorococcus marinus subsp. pastoris (strain CCMP1986 / NIES-2087 / MED4).